Here is a 125-residue protein sequence, read N- to C-terminus: MADSPRVCVQVQSVYIEAQSSPEDERFVFAYTVTVRNLGRTPVQLLGRYWLITNGNGKETEVQGEGVVGVQPHIQPGGEYQYTSGAVIETPFGTMQGHYEMVDDQGNGFHLDIPVFRLAVPTLIH.

Residues 1-125 (MADSPRVCVQ…FRLAVPTLIH (125 aa)) enclose the ApaG domain.

The polypeptide is Protein ApaG (Cronobacter sakazakii (strain ATCC BAA-894) (Enterobacter sakazakii)).